The sequence spans 147 residues: Protein Turandot Z (147 aa).

The N-terminal stretch at 1 to 23 is a signal peptide; the sequence is MYFAIRLSFVLAVLICLTGNGSA.

This sequence belongs to the Turandot family.

The protein resides in the secreted. A humoral factor that may play a role in stress tolerance. This chain is Protein Turandot Z, found in Drosophila melanogaster (Fruit fly).